A 481-amino-acid chain; its full sequence is Thiol protease (481 aa).

The 313-residue stretch at 169–481 folds into the Calpain catalytic domain; sequence DLREQALSST…ENFWYIAYMY (313 aa). Residues Cys-229, His-406, and Asn-426 contribute to the active site.

Belongs to the peptidase C2 family.

Its activity is regulated as follows. Inactive below 20 degrees Celsius and pH 6.0. Inhibited by divalent cations. In terms of biological role, thiol protease. Probably an important virulence factor. The chain is Thiol protease (tpr) from Porphyromonas gingivalis (strain ATCC BAA-308 / W83).